A 190-amino-acid chain; its full sequence is Probable calcium-binding protein CML27 (190 aa).

EF-hand domains follow at residues 27-62, 115-150, and 153-188; these read LNAL…LGLG, DDEG…LGLP, and RNLA…ITVW. Residues Asp40, Asn42, Asp44, Glu46, Glu51, Asp128, Asp130, Asp132, Glu139, Asp166, Asp168, Asp170, Arg172, and Glu177 each coordinate Ca(2+).

In terms of biological role, potential calcium sensor. This chain is Probable calcium-binding protein CML27 (CML27), found in Oryza sativa subsp. japonica (Rice).